Here is a 37-residue protein sequence, read N- to C-terminus: Bactericidin B-3 (37 aa).

G37 carries the glycine amide modification.

This sequence belongs to the cecropin family.

Its subcellular location is the secreted. In terms of biological role, cecropins have lytic and antibacterial activity against several Gram-positive and Gram-negative bacteria. This Manduca sexta (Tobacco hawkmoth) protein is Bactericidin B-3.